A 630-amino-acid polypeptide reads, in one-letter code: Pro-interleukin-16 (630 aa).

Disordered stretches follow at residues glutamate 30–threonine 268 and proline 316–threonine 343. The segment covering isoleucine 129–serine 143 has biased composition (low complexity). Serine 220 is subject to Phosphoserine. Over residues serine 321–threonine 343 the composition is skewed to polar residues. The interval lysine 404 to serine 500 is interaction with PPP1R12A, PPP1R12B and PPP1R12C. 2 PDZ domains span residues histidine 410–lysine 495 and threonine 532–lysine 617.

In terms of assembly, homotetramer. Pro-interleukin-16 interacts (via PDZ 2 domain) with PPP1R12A, PPP1R12B and PPP1R12C. Pro-interleukin-16 interacts with GRIN2A. Pro-interleukin-16 interacts with GABPB1. Pro-interleukin-16 interacts (via PDZ 3 domain) with HDAC3.

The protein localises to the secreted. The protein resides in the cytoplasm. It localises to the nucleus. In terms of biological role, interleukin-16 stimulates a migratory response in CD4+ lymphocytes, monocytes, and eosinophils. Primes CD4+ T-cells for IL-2 and IL-15 responsiveness. Also induces T-lymphocyte expression of interleukin 2 receptor. Ligand for CD4. Its function is as follows. Pro-interleukin-16 is involved in cell cycle progression in T-cells. Appears to be involved in transcriptional regulation of SKP2 and is probably part of a transcriptional repression complex on the core promoter of the SKP2 gene. May act as a scaffold for GABPB1 (the DNA-binding subunit the GABP transcription factor complex) and HDAC3 thus maintaining transcriptional repression and blocking cell cycle progression in resting T-cells. In Macaca mulatta (Rhesus macaque), this protein is Pro-interleukin-16 (IL16).